Consider the following 275-residue polypeptide: NH(3)-dependent NAD(+) synthetase (275 aa).

Position 46 to 53 (46 to 53 (GISGGQDS)) interacts with ATP. Aspartate 52 is a Mg(2+) binding site. Residue arginine 140 participates in deamido-NAD(+) binding. Threonine 160 provides a ligand contact to ATP. Glutamate 165 is a binding site for Mg(2+). Positions 173 and 180 each coordinate deamido-NAD(+). Positions 189 and 211 each coordinate ATP. A deamido-NAD(+)-binding site is contributed by 260–261 (HK).

Belongs to the NAD synthetase family. As to quaternary structure, homodimer.

The enzyme catalyses deamido-NAD(+) + NH4(+) + ATP = AMP + diphosphate + NAD(+) + H(+). The protein operates within cofactor biosynthesis; NAD(+) biosynthesis; NAD(+) from deamido-NAD(+) (ammonia route): step 1/1. Catalyzes the ATP-dependent amidation of deamido-NAD to form NAD. Uses ammonia as a nitrogen source. The polypeptide is NH(3)-dependent NAD(+) synthetase (Escherichia coli O139:H28 (strain E24377A / ETEC)).